The chain runs to 291 residues: ATP synthase gamma chain (291 aa).

The protein belongs to the ATPase gamma chain family. As to quaternary structure, F-type ATPases have 2 components, CF(1) - the catalytic core - and CF(0) - the membrane proton channel. CF(1) has five subunits: alpha(3), beta(3), gamma(1), delta(1), epsilon(1). CF(0) has three main subunits: a, b and c.

The protein resides in the cell inner membrane. In terms of biological role, produces ATP from ADP in the presence of a proton gradient across the membrane. The gamma chain is believed to be important in regulating ATPase activity and the flow of protons through the CF(0) complex. The polypeptide is ATP synthase gamma chain (Burkholderia thailandensis (strain ATCC 700388 / DSM 13276 / CCUG 48851 / CIP 106301 / E264)).